Here is a 201-residue protein sequence, read N- to C-terminus: Holliday junction branch migration complex subunit RuvA (201 aa).

Residues 1–64 (MYEYIRGQFQ…EDFIGLYGFT (64 aa)) form a domain I region. Positions 65 to 143 (TREELEMFKL…PDELTSEEGQ (79 aa)) are domain II. The interval 144–152 (LIEGINDNS) is flexible linker. The domain III stretch occupies residues 153–201 (DYSFNINETLSALMALGYTEKEAQKALEKVDKTLSIENMIKESLKLLMR).

It belongs to the RuvA family. As to quaternary structure, homotetramer. Forms an RuvA(8)-RuvB(12)-Holliday junction (HJ) complex. HJ DNA is sandwiched between 2 RuvA tetramers; dsDNA enters through RuvA and exits via RuvB. An RuvB hexamer assembles on each DNA strand where it exits the tetramer. Each RuvB hexamer is contacted by two RuvA subunits (via domain III) on 2 adjacent RuvB subunits; this complex drives branch migration. In the full resolvosome a probable DNA-RuvA(4)-RuvB(12)-RuvC(2) complex forms which resolves the HJ.

The protein localises to the cytoplasm. The RuvA-RuvB-RuvC complex processes Holliday junction (HJ) DNA during genetic recombination and DNA repair, while the RuvA-RuvB complex plays an important role in the rescue of blocked DNA replication forks via replication fork reversal (RFR). RuvA specifically binds to HJ cruciform DNA, conferring on it an open structure. The RuvB hexamer acts as an ATP-dependent pump, pulling dsDNA into and through the RuvAB complex. HJ branch migration allows RuvC to scan DNA until it finds its consensus sequence, where it cleaves and resolves the cruciform DNA. In Clostridium perfringens (strain 13 / Type A), this protein is Holliday junction branch migration complex subunit RuvA.